A 294-amino-acid chain; its full sequence is tRNA pseudouridine synthase B (294 aa).

The active-site Nucleophile is D39.

This sequence belongs to the pseudouridine synthase TruB family. Type 1 subfamily.

It carries out the reaction uridine(55) in tRNA = pseudouridine(55) in tRNA. Responsible for synthesis of pseudouridine from uracil-55 in the psi GC loop of transfer RNAs. The protein is tRNA pseudouridine synthase B of Streptococcus pyogenes serotype M5 (strain Manfredo).